Consider the following 370-residue polypeptide: Acyl-CoA:lysophosphatidylglycerol acyltransferase 1 (370 aa).

A helical transmembrane segment spans residues 22–42 (FAFMVVNNLVAIPSYICYVII). Positions 101-106 (HQATGD) match the HXXXXD motif motif. Residues 342 to 362 (LWIFLIQSFAFLSGYMWYNII) form a helical membrane-spanning segment.

Belongs to the 1-acyl-sn-glycerol-3-phosphate acyltransferase family. As to expression, highly expressed in liver and placenta. Also expressed in peripheral blood, lung, kidney and brain. Detected at lower levels in colon. High expression is detected in brain and testis.

The protein localises to the endoplasmic reticulum membrane. The enzyme catalyses a 2-acyl-sn-glycero-3-phosphoethanolamine + octadecanoyl-CoA = 1-octadecanoyl-2-acyl-sn-glycero-3-phosphoethanolamine + CoA. It catalyses the reaction 2-(9Z-octadecenoyl)-sn-glycero-3-phosphoethanolamine + octadecanoyl-CoA = 1-octadecanoyl-2-(9Z-octadecenoyl)-sn-glycero-3-phosphoethanolamine + CoA. It carries out the reaction a 2-acyl-sn-glycero-3-phosphoethanolamine + hexadecanoyl-CoA = 1-hexadecanoyl-2-acyl-sn-glycero-3-phosphoethanolamine + CoA. The catalysed reaction is 2-(9Z-octadecenoyl)-sn-glycero-3-phosphoethanolamine + hexadecanoyl-CoA = 1-hexadecanoyl-2-(9Z-octadecenoyl)-sn-glycero-3-phosphoethanolamine + CoA. The enzyme catalyses 1-tetradecanoyl-sn-glycero-3-phospho-(1'-sn-glycerol) + hexadecanoyl-CoA = 1-tetradecanoyl-2-hexadecanoyl-sn-glycero-3-phospho-(1'-sn-glycerol) + CoA. It catalyses the reaction 1-hexadecanoyl-sn-glycero-3-phospho-(1'-sn-glycerol) + dodecanoyl-CoA = 1-hexadecanoyl-2-dodecanoyl-sn-glycero-3-phospho-(1'-sn-glycerol) + CoA. It carries out the reaction 1-hexadecanoyl-sn-glycero-3-phospho-(1'-sn-glycerol) + hexadecanoyl-CoA = 1,2-dihexadecanoyl-sn-glycero-3-phospho-(1'-sn-glycerol) + CoA. The catalysed reaction is 1-hexadecanoyl-sn-glycero-3-phospho-(1'-sn-glycerol) + octadecanoyl-CoA = 1-hexadecanoyl-2-octadecanoyl-sn-glycero-3-phospho-(1'-sn-glycerol) + CoA. The enzyme catalyses 1-octadecanoyl-sn-glycero-3-phospho-(1'-sn-glycerol) + hexadecanoyl-CoA = 1-octadecanoyl-2-hexadecanoyl-sn-glycero-3-phospho-(1'-sn-glycerol) + CoA. It catalyses the reaction 1-(9Z-octadecenoyl)-sn-glycero-3-phospho-(1'-sn-glycerol) + dodecanoyl-CoA = 1-(9Z-octadecenoyl)-2-dodecanoyl-sn-glycero-3-phospho-(1'-sn-glycerol) + CoA. It carries out the reaction 1-hexadecanoyl-sn-glycero-3-phospho-(1'-sn-glycerol) + (9Z)-octadecenoyl-CoA = 1-hexadecanoyl-2-(9Z-octadecenoyl)-sn-glycero-3-phospho-(1'-sn-glycerol) + CoA. The catalysed reaction is 1-(9Z-octadecenoyl)-sn-glycero-3-phospho-(1'-sn-glycerol) + hexadecanoyl-CoA = 1-(9Z-octadecenoyl)-2-hexadecanoyl-sn-glycero-3-phospho-(1'-sn-glycerol) + CoA. The enzyme catalyses 1-(9Z-octadecenoyl)-sn-glycero-3-phospho-(1'-sn-glycerol) + (9Z)-octadecenoyl-CoA = 1,2-di-(9Z-octadecenoyl)-sn-glycero-3-phospho-(1'-sn-glycerol) + CoA. It catalyses the reaction a 2-acylglycerol + an acyl-CoA = a 1,2-diacylglycerol + CoA. It carries out the reaction a 2-acylglycerol + hexadecanoyl-CoA = a 1-hexadecanoyl-2-acylglycerol + CoA. The catalysed reaction is a 1-acylglycerol + hexadecanoyl-CoA = an hexadecanoyl-acylglycerol + CoA. The enzyme catalyses a 2-acyl-sn-glycero-3-phosphocholine + an acyl-CoA = a 1,2-diacyl-sn-glycero-3-phosphocholine + CoA. It catalyses the reaction 2-(9Z-octadecenoyl)-sn-glycero-3-phosphocholine + octadecanoyl-CoA = 1-octadecanoyl-2-(9Z-octadecenoyl)-sn-glycero-3-phosphocholine + CoA. It carries out the reaction 2-(9Z,12Z-octadecadienoyl)-sn-glycero-3-phosphocholine + octadecanoyl-CoA = 1-octadecanoyl-2-(9Z,12Z)-octadecadienoyl-sn-glycero-3-phosphocholine + CoA. The catalysed reaction is 2-(5Z,8Z,11Z,14Z)-eicosatetraenoyl-sn-glycero-3-phosphocholine + octadecanoyl-CoA = 1-octadecanoyl-2-(5Z,8Z,11Z,14Z-eicosatetraenoyl)-sn-glycero-3-phosphocholine + CoA. The enzyme catalyses 2-(9Z-octadecenoyl)-sn-glycero-3-phosphocholine + hexadecanoyl-CoA = 1-hexadecanoyl-2-(9Z-octadecenoyl)-sn-glycero-3-phosphocholine + CoA. It catalyses the reaction 2-(9Z-octadecenoyl)-sn-glycero-3-phospho-L-serine + hexadecanoyl-CoA = 1-hexadecanoyl-2-(9Z-octadecenoyl)-sn-glycero-3-phospho-L-serine + CoA. It carries out the reaction 2-(4Z,7Z,10Z,13Z,16Z,19Z-docosahexaenoyl)-sn-glycero-3-phosphocholine + octadecanoyl-CoA = 1-octadecanoyl-2-(4Z,7Z,10Z,13Z,16Z,19Z-docosahexaenoyl)-sn-glycero-3-phosphocholine + CoA. The catalysed reaction is 1-(9Z-octadecenoyl)-sn-glycero-3-phospho-L-serine + octadecanoyl-CoA = 1-(9Z-octadecenoyl)-2-octadecanoyl-sn-glycero-3-phospho-L-serine + CoA. The enzyme catalyses a 2-acyl-sn-glycero-3-phosphoethanolamine + a fatty acyl-CoA = a 1,2-diacyl-sn-glycero-3-phosphoethanolamine + CoA. Its function is as follows. Lysophospholipid acyltransferase involved in fatty acyl chain remodeling of glycerophospholipids in the endoplasmic reticulum membrane. Selectively catalyzes the transfer and esterification of saturated long-chain fatty acids from acyl-CoA to the sn-1 position of 1-lyso-2-acyl phosphatidylethanolamines (1-lyso-PE, LPE), with a preference for stearoyl CoA over palmitoyl CoA as acyl donor. Acts in concert with an unknown phospholipase A1 to convert palmitate phosphatidylethanolamine (PE) species into stearate ones. Provides substrates to the PE methylation pathway, controlling stearate/palmitate composition of PE and phosphatidylcholine (PC) species with an overall impact on de novo hepatic lipid synthesis, body fat content and life span. Can acylate lysophosphatidylglycerols (LPG) using various saturated fatty acyl-CoAs as acyl donors. Can also acylate monoacylglycerols with a preference for 2-monoacylglycerols over 1-monoacylglycerols. Has no activity toward lysophosphatidic acids (LPA). The chain is Acyl-CoA:lysophosphatidylglycerol acyltransferase 1 from Homo sapiens (Human).